Consider the following 146-residue polypeptide: uncharacterized protein (146 aa).

A helical transmembrane segment spans residues Phe-7–Asn-27.

The protein belongs to the asfivirus E146L family.

The protein resides in the host membrane. It is found in the virion. This is an uncharacterized protein from African swine fever virus (strain Badajoz 1971 Vero-adapted) (Ba71V).